A 1171-amino-acid polypeptide reads, in one-letter code: ATP-dependent helicase/deoxyribonuclease subunit B (1171 aa).

Positions M1–A390 constitute a UvrD-like helicase ATP-binding domain. Residue G8–S15 participates in ATP binding. One can recognise a UvrD-like helicase C-terminal domain in the interval M281–D587. [4Fe-4S] cluster contacts are provided by C805, C1129, C1132, and C1138.

The protein belongs to the helicase family. AddB/RexB type 1 subfamily. Heterodimer of AddA and AddB. Mg(2+) serves as cofactor. Requires [4Fe-4S] cluster as cofactor.

Functionally, the heterodimer acts as both an ATP-dependent DNA helicase and an ATP-dependent, dual-direction single-stranded exonuclease. Recognizes the chi site generating a DNA molecule suitable for the initiation of homologous recombination. The AddB subunit has 5' -&gt; 3' nuclease activity but not helicase activity. In Bacillus cereus (strain ATCC 14579 / DSM 31 / CCUG 7414 / JCM 2152 / NBRC 15305 / NCIMB 9373 / NCTC 2599 / NRRL B-3711), this protein is ATP-dependent helicase/deoxyribonuclease subunit B.